A 334-amino-acid polypeptide reads, in one-letter code: Protein-glutamate methylesterase FrzG (334 aa).

The 188-residue stretch at 147 to 334 (PYPLVAIAAS…AALMQWVDVC (188 aa)) folds into the CheB-type methylesterase domain. Active-site residues include S156, H183, and D276.

It carries out the reaction [protein]-L-glutamate 5-O-methyl ester + H2O = L-glutamyl-[protein] + methanol + H(+). Functionally, probable methylesterase. Required for the normal aggregation of M.xanthus cells during fruiting body formation. It is also a component of a sensory transduction pathway that controls the frequency at which cells reverse their gliding direction. It may remove the methyl group from the gamma-glutamyl methyl ester residues in FrzCD. This Myxococcus xanthus protein is Protein-glutamate methylesterase FrzG (frzG).